The following is a 263-amino-acid chain: Nicotinamide riboside transporter PnuC (263 aa).

The Cytoplasmic segment spans residues methionine 1–tryptophan 40. Residues threonine 41 to phenylalanine 61 traverse the membrane as a helical segment. Asparagine 62 is a topological domain (periplasmic). Residues proline 63–glycine 83 form a helical membrane-spanning segment. Residues lysine 84–lysine 86 lie on the Cytoplasmic side of the membrane. The helical transmembrane segment at isoleucine 87 to phenylalanine 107 threads the bilayer. The Periplasmic segment spans residues lysine 108–leucine 109. Residues tyrosine 110–tryptophan 131 form a helical membrane-spanning segment. Glutamine 124 contributes to the beta-nicotinamide D-riboside binding site. Topologically, residues arginine 132–glutamine 155 are cytoplasmic. Residues tryptophan 156–leucine 177 traverse the membrane as a helical segment. The Periplasmic portion of the chain corresponds to glycine 178–alanine 180. A helical transmembrane segment spans residues leucine 181–leucine 201. Glutamine 196 lines the beta-nicotinamide D-riboside pocket. Residues arginine 202 to glutamate 205 lie on the Cytoplasmic side of the membrane. Residues glutamine 206 to phenylalanine 226 form a helical membrane-spanning segment. 2 residues coordinate beta-nicotinamide D-riboside: tryptophan 210 and asparagine 214. Over lysine 227–serine 232 the chain is Periplasmic. The chain crosses the membrane as a helical span at residues leucine 233–tryptophan 253. Tyrosine 242 contributes to the beta-nicotinamide D-riboside binding site. At threonine 254–glutamine 263 the chain is on the cytoplasmic side.

Belongs to the nicotinamide ribonucleoside (NR) uptake permease (TC 4.B.1) family. In terms of assembly, homotrimer.

It is found in the cell inner membrane. Functionally, required for nicotinamide riboside transport across the inner membrane. The sequence is that of Nicotinamide riboside transporter PnuC from Neisseria mucosa (strain ATCC 25996 / DSM 4631 / NCTC 10774 / M26).